A 258-amino-acid polypeptide reads, in one-letter code: Imidazole glycerol phosphate synthase subunit HisF (258 aa).

Active-site residues include D11 and D130.

This sequence belongs to the HisA/HisF family. In terms of assembly, heterodimer of HisH and HisF.

The protein localises to the cytoplasm. It catalyses the reaction 5-[(5-phospho-1-deoxy-D-ribulos-1-ylimino)methylamino]-1-(5-phospho-beta-D-ribosyl)imidazole-4-carboxamide + L-glutamine = D-erythro-1-(imidazol-4-yl)glycerol 3-phosphate + 5-amino-1-(5-phospho-beta-D-ribosyl)imidazole-4-carboxamide + L-glutamate + H(+). Its pathway is amino-acid biosynthesis; L-histidine biosynthesis; L-histidine from 5-phospho-alpha-D-ribose 1-diphosphate: step 5/9. IGPS catalyzes the conversion of PRFAR and glutamine to IGP, AICAR and glutamate. The HisF subunit catalyzes the cyclization activity that produces IGP and AICAR from PRFAR using the ammonia provided by the HisH subunit. The polypeptide is Imidazole glycerol phosphate synthase subunit HisF (Xanthobacter autotrophicus (strain ATCC BAA-1158 / Py2)).